We begin with the raw amino-acid sequence, 896 residues long: Isoleucine--tRNA ligase (896 aa).

Positions 57–67 (PYANNNIHIGH) match the 'HIGH' region motif. L-isoleucyl-5'-AMP is bound at residue Glu543. Residues 584 to 588 (KMSKS) carry the 'KMSKS' region motif. An ATP-binding site is contributed by Lys587. Cys869, Cys872, Cys885, and Cys888 together coordinate Zn(2+).

It belongs to the class-I aminoacyl-tRNA synthetase family. IleS type 1 subfamily. As to quaternary structure, monomer. It depends on Zn(2+) as a cofactor.

It is found in the cytoplasm. It catalyses the reaction tRNA(Ile) + L-isoleucine + ATP = L-isoleucyl-tRNA(Ile) + AMP + diphosphate. Catalyzes the attachment of isoleucine to tRNA(Ile). As IleRS can inadvertently accommodate and process structurally similar amino acids such as valine, to avoid such errors it has two additional distinct tRNA(Ile)-dependent editing activities. One activity is designated as 'pretransfer' editing and involves the hydrolysis of activated Val-AMP. The other activity is designated 'posttransfer' editing and involves deacylation of mischarged Val-tRNA(Ile). This Acholeplasma laidlawii (strain PG-8A) protein is Isoleucine--tRNA ligase.